The following is a 258-amino-acid chain: Thiazole synthase (258 aa).

The active-site Schiff-base intermediate with DXP is the K100. Residues G161, 187-188 (AG), and 209-210 (NT) contribute to the 1-deoxy-D-xylulose 5-phosphate site.

It belongs to the ThiG family. In terms of assembly, homotetramer. Forms heterodimers with either ThiH or ThiS.

It localises to the cytoplasm. The enzyme catalyses [ThiS sulfur-carrier protein]-C-terminal-Gly-aminoethanethioate + 2-iminoacetate + 1-deoxy-D-xylulose 5-phosphate = [ThiS sulfur-carrier protein]-C-terminal Gly-Gly + 2-[(2R,5Z)-2-carboxy-4-methylthiazol-5(2H)-ylidene]ethyl phosphate + 2 H2O + H(+). Its pathway is cofactor biosynthesis; thiamine diphosphate biosynthesis. Catalyzes the rearrangement of 1-deoxy-D-xylulose 5-phosphate (DXP) to produce the thiazole phosphate moiety of thiamine. Sulfur is provided by the thiocarboxylate moiety of the carrier protein ThiS. In vitro, sulfur can be provided by H(2)S. The chain is Thiazole synthase from Campylobacter jejuni subsp. jejuni serotype O:23/36 (strain 81-176).